A 457-amino-acid polypeptide reads, in one-letter code: Oxygen-independent coproporphyrinogen III oxidase (457 aa).

The Radical SAM core domain maps to 47–279 (LKNPMPLSLY…EILESLISFL (233 aa)). Tyrosine 56 is a binding site for S-adenosyl-L-methionine. Cysteine 62 and cysteine 66 together coordinate [4Fe-4S] cluster. Phenylalanine 68 provides a ligand contact to S-adenosyl-L-methionine. [4Fe-4S] cluster is bound at residue cysteine 69. Residues glycine 113, 114–115 (GT), glutamate 147, glutamine 174, arginine 186, aspartate 211, alanine 245, and isoleucine 331 contribute to the S-adenosyl-L-methionine site.

The protein belongs to the anaerobic coproporphyrinogen-III oxidase family. Monomer. [4Fe-4S] cluster is required as a cofactor.

The protein resides in the cytoplasm. It catalyses the reaction coproporphyrinogen III + 2 S-adenosyl-L-methionine = protoporphyrinogen IX + 2 5'-deoxyadenosine + 2 L-methionine + 2 CO2. The protein operates within porphyrin-containing compound metabolism; protoporphyrin-IX biosynthesis; protoporphyrinogen-IX from coproporphyrinogen-III (AdoMet route): step 1/1. Functionally, involved in the heme biosynthesis. Catalyzes the anaerobic oxidative decarboxylation of propionate groups of rings A and B of coproporphyrinogen III to yield the vinyl groups in protoporphyrinogen IX. This is Oxygen-independent coproporphyrinogen III oxidase (hemN) from Helicobacter pylori (strain ATCC 700392 / 26695) (Campylobacter pylori).